The following is a 190-amino-acid chain: FMN reductase (NADH) RutF (190 aa).

It belongs to the non-flavoprotein flavin reductase family. RutF subfamily.

The catalysed reaction is FMNH2 + NAD(+) = FMN + NADH + 2 H(+). Functionally, catalyzes the reduction of FMN to FMNH2 which is used to reduce pyrimidine by RutA via the Rut pathway. In Pantoea ananatis (strain LMG 20103), this protein is FMN reductase (NADH) RutF.